Reading from the N-terminus, the 96-residue chain is Ubiquitin-like protein NEDD8-like protein 1 (96 aa).

A disordered region spans residues 75–96 (SQSDNSEKSEKSGKSEKDCILM). Residues 79–96 (NSEKSEKSGKSEKDCILM) are compositionally biased toward basic and acidic residues.

This sequence belongs to the ubiquitin family.

This chain is Ubiquitin-like protein NEDD8-like protein 1 (nedd8l1), found in Dictyostelium discoideum (Social amoeba).